A 1187-amino-acid chain; its full sequence is Protein WWC2 (1187 aa).

WW domains are found at residues 10–43 (LPLP…DPRD) and 57–90 (DELP…DPRK). Coiled coils occupy residues 121 to 194 (KEQR…YKQQ) and 224 to 256 (ELKS…FHLD). The residue at position 286 (S286) is a Phosphoserine. Positions 302–423 (LAEKVRLSLQ…EETTKLTTSL (122 aa)) form a coiled coil. Residues 438-464 (SSGSSLGSLASSRGSLNTSSRGSLNSL) are disordered. Residues 697–820 (ETAQVQIGLR…FSNEIFMLWY (124 aa)) form the C2 domain. 2 disordered regions span residues 830–849 (CKKN…QPML) and 874–963 (ELAQ…ETNT). Residues 859–885 (ALLARTSAELLAVEQELAQEEEEEELR) adopt a coiled-coil conformation. Residues 875-884 (LAQEEEEEEL) show a composition bias toward acidic residues. A Phosphothreonine modification is found at T999. S1017 carries the post-translational modification Phosphoserine. An interaction with PRKCZ region spans residues 1026–1045 (SLFVRNSTERRSLRVKRAVC). Residues 1063–1143 (DLELDLQASL…DLNAERLMRQ (81 aa)) are a coiled coil.

It belongs to the WWC family. In terms of assembly, forms homodimers and heterodimers with WWC1 and WWC3. Interacts with DLC1 and PRKCZ. Interacts (via WW domains) with LATS1 and LATS2.

Its subcellular location is the cytoplasm. The protein resides in the cytosol. Regulator of the Hippo signaling pathway, also known as the Salvador-Warts-Hippo (SWH) pathway. Enhances phosphorylation of LATS1 and YAP1 and negatively regulates cell proliferation and organ growth due to a suppression of the transcriptional activity of YAP1, the major effector of the Hippo pathway. This is Protein WWC2 (Wwc2) from Mus musculus (Mouse).